The primary structure comprises 156 residues: Small ribosomal subunit protein uS7 (156 aa).

It belongs to the universal ribosomal protein uS7 family. In terms of assembly, part of the 30S ribosomal subunit. Contacts proteins S9 and S11.

Its function is as follows. One of the primary rRNA binding proteins, it binds directly to 16S rRNA where it nucleates assembly of the head domain of the 30S subunit. Is located at the subunit interface close to the decoding center, probably blocks exit of the E-site tRNA. The chain is Small ribosomal subunit protein uS7 from Streptococcus equi subsp. equi (strain 4047).